Consider the following 705-residue polypeptide: Gamma-adducin (705 aa).

Over residues M1–I10 the composition is skewed to polar residues. Residues M1–E22 form a disordered region. S2 carries the N-acetylserine modification. Phosphoserine occurs at positions 31, 42, 64, 402, 414, 423, 442, and 461. Disordered regions lie at residues E472–N495, P535–H556, K572–H612, and E658–A705. Residue K484 forms a Glycyl lysine isopeptide (Lys-Gly) (interchain with G-Cter in SUMO2) linkage. A phosphoserine mark is found at S583, S585, S590, S672, S676, S678, and S680. The span at S590–P605 shows a compositional bias: low complexity. The span at P681–A705 shows a compositional bias: basic residues. Position 682 is a phosphoserine; by PKC (S682). Residues K683–K700 are interaction with calmodulin.

The protein belongs to the aldolase class II family. Adducin subfamily. In terms of assembly, heterodimer of an alpha and a gamma subunit. In terms of processing, sumoylated. Post-translationally, proteolytically cleaved by asparagine endopeptidase (AEP) into 2 fragments. Overexpression of the 1-357 fragment induces neuronal apoptosis, and overexpression of either 1-357 or 358-706 fragment increases the degeneration of dendritic spines. Overexpression of the 1-357 fragment impairs neurite outgrowth by downregulating the expression of Rac2, and induces synaptic dysfunction and cognitive impairments in tau P301S transgenic mice, a mouse model for Alzheimer disease (AD). As to expression, expressed in kidney, brain, spleen, liver and heart. Expressed in renal interlobular arteries, afferent/efferent arterioles, parietal glomerular epithelial cells and microvilli of the luminal surface of the proximal tubule (at protein level). Expressed in podocytes (at protein level) Expressed in renal cortex (at protein level). Expressed in primary vascular smooth muscle cells (VSMCs) of the kidney (at protein level). Expressed in tubular cells and glomeruli (at protein level).

The protein resides in the cytoplasm. The protein localises to the cytoskeleton. It localises to the cell membrane. Functionally, membrane-cytoskeleton-associated protein that promotes the assembly of the spectrin-actin network. Plays a role in actin filament capping. Binds to calmodulin. Involved in myogenic reactivity of the renal afferent arteriole (Af-art), renal interlobular arteries and middle cerebral artery (MCA) to increased perfusion pressure. Involved in regulation of potassium channels in the vascular smooth muscle cells (VSMCs) of the Af-art and MCA ex vivo. Involved in regulation of glomerular capillary pressure, glomerular filtration rate (GFR) and glomerular nephrin expression in response to hypertension. Involved in renal blood flow (RBF) autoregulation. Plays a role in podocyte structure and function. Regulates globular monomer actin (G-actin) and filamentous polymer actin (F-actin) ratios in the primary podocytes affecting actin cytoskeleton organization. Regulates expression of synaptopodin, RhoA, Rac1 and CDC42 in the renal cortex and the primary podocytes. Regulates expression of nephrin in the glomeruli and in the primary podocytes, expression of nephrin and podocinin in the renal cortex, and expression of focal adhesion proteins integrin alpha-3 and integrin beta-1 in the glomeruli. Involved in cell migration and cell adhesion of podocytes, and in podocyte foot process effacement. Regulates expression of profibrotics markers MMP2, MMP9, TGF beta-1, tubular tight junction protein E-cadherin, and mesenchymal markers vimentin and alpha-SMA. Promotes the growth of neurites. The chain is Gamma-adducin (Add3) from Rattus norvegicus (Rat).